Reading from the N-terminus, the 331-residue chain is Holliday junction branch migration complex subunit RuvB (331 aa).

A large ATPase domain (RuvB-L) region spans residues 1–186; the sequence is MAKTMMQDRL…FGIVQRLEFY (186 aa). Residues isoleucine 25, arginine 26, glycine 67, lysine 70, threonine 71, threonine 72, 133 to 135, arginine 176, tyrosine 186, and arginine 223 contribute to the ATP site; that span reads EDF. Threonine 71 contributes to the Mg(2+) binding site. A small ATPAse domain (RuvB-S) region spans residues 187-257; it reads NIADLTTIVS…IAGSALDMLA (71 aa). Residues 260–331 form a head domain (RuvB-H) region; sequence RRGLDHLDRR…LTQMAIDQML (72 aa). Residues arginine 296, arginine 315, and arginine 320 each coordinate DNA.

This sequence belongs to the RuvB family. Homohexamer. Forms an RuvA(8)-RuvB(12)-Holliday junction (HJ) complex. HJ DNA is sandwiched between 2 RuvA tetramers; dsDNA enters through RuvA and exits via RuvB. An RuvB hexamer assembles on each DNA strand where it exits the tetramer. Each RuvB hexamer is contacted by two RuvA subunits (via domain III) on 2 adjacent RuvB subunits; this complex drives branch migration. In the full resolvosome a probable DNA-RuvA(4)-RuvB(12)-RuvC(2) complex forms which resolves the HJ.

The protein resides in the cytoplasm. It carries out the reaction ATP + H2O = ADP + phosphate + H(+). Its function is as follows. The RuvA-RuvB-RuvC complex processes Holliday junction (HJ) DNA during genetic recombination and DNA repair, while the RuvA-RuvB complex plays an important role in the rescue of blocked DNA replication forks via replication fork reversal (RFR). RuvA specifically binds to HJ cruciform DNA, conferring on it an open structure. The RuvB hexamer acts as an ATP-dependent pump, pulling dsDNA into and through the RuvAB complex. RuvB forms 2 homohexamers on either side of HJ DNA bound by 1 or 2 RuvA tetramers; 4 subunits per hexamer contact DNA at a time. Coordinated motions by a converter formed by DNA-disengaged RuvB subunits stimulates ATP hydrolysis and nucleotide exchange. Immobilization of the converter enables RuvB to convert the ATP-contained energy into a lever motion, pulling 2 nucleotides of DNA out of the RuvA tetramer per ATP hydrolyzed, thus driving DNA branch migration. The RuvB motors rotate together with the DNA substrate, which together with the progressing nucleotide cycle form the mechanistic basis for DNA recombination by continuous HJ branch migration. Branch migration allows RuvC to scan DNA until it finds its consensus sequence, where it cleaves and resolves cruciform DNA. This Psychrobacter cryohalolentis (strain ATCC BAA-1226 / DSM 17306 / VKM B-2378 / K5) protein is Holliday junction branch migration complex subunit RuvB.